The following is a 274-amino-acid chain: Ubiquinone biosynthesis O-methyltransferase, mitochondrial (274 aa).

The N-terminal 30 residues, 1 to 30 (MNSMNILNKVKNVKSYTRLVRQGFLSQQRN), are a transit peptide targeting the mitochondrion. Residues arginine 65, glycine 88, aspartate 109, and methionine 154 each contribute to the S-adenosyl-L-methionine site. Glutamate 155, glutamate 158, and histidine 159 together coordinate Mg(2+).

The protein belongs to the class I-like SAM-binding methyltransferase superfamily. UbiG/COQ3 family. In terms of assembly, component of a multi-subunit COQ enzyme complex, composed of at least coq3, coq4, coq5, coq6, coq7 and coq9. Mg(2+) serves as cofactor.

It localises to the mitochondrion inner membrane. It catalyses the reaction 3,4-dihydroxy-5-(all-trans-decaprenyl)benzoate + S-adenosyl-L-methionine = 4-hydroxy-3-methoxy-5-(all-trans-decaprenyl)benzoate + S-adenosyl-L-homocysteine + H(+). The enzyme catalyses a 3-demethylubiquinone + S-adenosyl-L-methionine = a ubiquinone + S-adenosyl-L-homocysteine. It carries out the reaction 3-demethylubiquinol-10 + S-adenosyl-L-methionine = ubiquinol-10 + S-adenosyl-L-homocysteine + H(+). It functions in the pathway cofactor biosynthesis; ubiquinone biosynthesis. In terms of biological role, O-methyltransferase required for two non-consecutive steps during ubiquinone biosynthesis. Catalyzes the 2 O-methylation of 3,4-dihydroxy-5-(all-trans-decaprenyl)benzoic acid into 4-hydroxy-3-methoxy-5-(all-trans-decaprenyl)benzoic acid. Also catalyzes the last step of ubiquinone biosynthesis by mediating methylation of 3-demethylubiquinone into ubiquinone. Also able to mediate the methylation of 3-demethylubiquinol-10 into ubiquinol-10. The protein is Ubiquinone biosynthesis O-methyltransferase, mitochondrial of Schizosaccharomyces pombe (strain 972 / ATCC 24843) (Fission yeast).